A 658-amino-acid polypeptide reads, in one-letter code: ATP-dependent RNA helicase MSS116, mitochondrial (658 aa).

Residues 1–35 (MFRVTGIATARAVALQPFRAPLGVIRRFGISATAS) constitute a mitochondrion transit peptide. Positions 40–79 (HGHDMQSRNGSRWDSRRQGDRRSSRWEGRGSDREDGERGS) are enriched in basic and acidic residues. A disordered region spans residues 40–104 (HGHDMQSRNG…DGAAREGFSL (65 aa)). Residues 126 to 154 (TLVEEGVLSNELYEMLQSRGFDKLTPVQQ) carry the Q motif motif. Residues 158 to 343 (KPILQTEHDV…NSIMNHAKCL (186 aa)) enclose the Helicase ATP-binding domain. 171-178 (AKTGTGKT) is an ATP binding site. The DEAD box signature appears at 284–287 (DEAD). The Helicase C-terminal domain maps to 372–528 (NITASLYKIR…TFDAAAQELS (157 aa)).

The protein belongs to the DEAD box helicase family. DDX18/HAS1 subfamily.

It localises to the mitochondrion matrix. The catalysed reaction is ATP + H2O = ADP + phosphate + H(+). In terms of biological role, ATP-dependent RNA helicase required for mitochondrial splicing of group I and II introns. Also required for efficient mitochondrial translation. This is ATP-dependent RNA helicase MSS116, mitochondrial (MSS116) from Eremothecium gossypii (strain ATCC 10895 / CBS 109.51 / FGSC 9923 / NRRL Y-1056) (Yeast).